Reading from the N-terminus, the 247-residue chain is NAD-dependent protein deacetylase 2 (247 aa).

One can recognise a Deacetylase sirtuin-type domain in the interval Met1–Glu247. Ala23, Thr27, Phe34, Arg35, Gln103, Ile105, Asp106, and His121 together coordinate NAD(+). Residue Phe34 participates in nicotinamide binding. Nicotinamide contacts are provided by Ile105 and Asp106. The active-site Proton acceptor is His121. 4 residues coordinate Zn(2+): Cys129, Cys132, Cys149, and Cys152. Positions 188, 189, 215, and 233 each coordinate NAD(+).

The protein belongs to the sirtuin family. Class U subfamily. Zn(2+) serves as cofactor.

It is found in the cytoplasm. The enzyme catalyses N(6)-acetyl-L-lysyl-[protein] + NAD(+) + H2O = 2''-O-acetyl-ADP-D-ribose + nicotinamide + L-lysyl-[protein]. Its function is as follows. NAD-dependent protein deacetylase which modulates the activities of several enzymes which are inactive in their acetylated form. This Geobacillus kaustophilus (strain HTA426) protein is NAD-dependent protein deacetylase 2.